Here is a 156-residue protein sequence, read N- to C-terminus: Small ribosomal subunit protein uS7 (156 aa).

Belongs to the universal ribosomal protein uS7 family. Part of the 30S ribosomal subunit. Contacts proteins S9 and S11.

One of the primary rRNA binding proteins, it binds directly to 16S rRNA where it nucleates assembly of the head domain of the 30S subunit. Is located at the subunit interface close to the decoding center, probably blocks exit of the E-site tRNA. The chain is Small ribosomal subunit protein uS7 from Nitratidesulfovibrio vulgaris (strain ATCC 29579 / DSM 644 / CCUG 34227 / NCIMB 8303 / VKM B-1760 / Hildenborough) (Desulfovibrio vulgaris).